We begin with the raw amino-acid sequence, 33 residues long: ATP synthase 27 kDa subunit, mitochondrial (33 aa).

The protein resides in the mitochondrion. It localises to the mitochondrion inner membrane. Functionally, mitochondrial membrane ATP synthase (F(1)F(0) ATP synthase or Complex V) produces ATP from ADP in the presence of a proton gradient across the membrane which is generated by electron transport complexes of the respiratory chain. F-type ATPases consist of two structural domains, F(1) - containing the extramembraneous catalytic core and F(0) - containing the membrane proton channel, linked together by a central stalk and a peripheral stalk. During catalysis, ATP synthesis in the catalytic domain of F(1) is coupled via a rotary mechanism of the central stalk subunits to proton translocation. Part of the complex F(0) domain. The protein is ATP synthase 27 kDa subunit, mitochondrial of Solanum tuberosum (Potato).